Here is a 407-residue protein sequence, read N- to C-terminus: Cation efflux system protein CusB (407 aa).

Residues 1 to 26 (MKKIALIIGSMIAGGIISAAGFTWFA) form the signal peptide.

This sequence belongs to the membrane fusion protein (MFP) (TC 8.A.1) family. As to quaternary structure, the cus efflux system is composed of CusA, CusB, CusC and CusF.

Part of a cation efflux system that mediates resistance to copper and silver. The polypeptide is Cation efflux system protein CusB (cusB) (Escherichia coli O6:H1 (strain CFT073 / ATCC 700928 / UPEC)).